A 770-amino-acid chain; its full sequence is ATP-dependent RNA helicase HCA4 (770 aa).

Positions 41 to 69 (KFFKDLPISDPTLKGLRESSFIKLTEIQA) match the Q motif motif. One can recognise a Helicase ATP-binding domain in the interval 72–246 (IPVSLQGHDV…RLSLTDYKTV (175 aa)). 85-92 (AKTGSGKT) contributes to the ATP binding site. Residues 194-197 (DEAD) carry the DEAD box motif. The Helicase C-terminal domain occupies 278–437 (KLDILFSFIK…SIKPQLQSLL (160 aa)). 4 positions are modified to phosphoserine: S692, S710, S714, and S743. A disordered region spans residues 705-724 (GTGNLSDDMSDGDMPDSEGH).

It belongs to the DEAD box helicase family. DDX10/DBP4 subfamily. As to quaternary structure, interacts with the U3 and U14 snoRNAs. Associates with pre-ribosomal complexes.

The protein localises to the nucleus. It is found in the nucleolus. It catalyses the reaction ATP + H2O = ADP + phosphate + H(+). Functionally, ATP-dependent RNA helicase required for ribosome biogenesis. Involved in the release of U14 snoRNA in pre-ribosomal complexes. Required for pre-rRNA cleavage at site A2. The chain is ATP-dependent RNA helicase HCA4 (HCA4) from Saccharomyces cerevisiae (strain ATCC 204508 / S288c) (Baker's yeast).